A 184-amino-acid polypeptide reads, in one-letter code: Ribosome maturation factor RimM (184 aa).

One can recognise a PRC barrel domain in the interval 101–180; that stretch reads EGEFFYCDLV…KITTHNAKTL (80 aa).

This sequence belongs to the RimM family. In terms of assembly, binds ribosomal protein uS19.

It localises to the cytoplasm. Functionally, an accessory protein needed during the final step in the assembly of 30S ribosomal subunit, possibly for assembly of the head region. Essential for efficient processing of 16S rRNA. May be needed both before and after RbfA during the maturation of 16S rRNA. It has affinity for free ribosomal 30S subunits but not for 70S ribosomes. This chain is Ribosome maturation factor RimM, found in Helicobacter pylori (strain ATCC 700392 / 26695) (Campylobacter pylori).